Here is a 297-residue protein sequence, read N- to C-terminus: UDP-N-acetylenolpyruvoylglucosamine reductase (297 aa).

Positions 26–191 (KSGGTADWLF…VAARFRGHPG (166 aa)) constitute an FAD-binding PCMH-type domain. Arg171 is a catalytic residue. Ser220 serves as the catalytic Proton donor. Glu290 is an active-site residue.

It belongs to the MurB family. FAD is required as a cofactor.

The protein localises to the cytoplasm. It catalyses the reaction UDP-N-acetyl-alpha-D-muramate + NADP(+) = UDP-N-acetyl-3-O-(1-carboxyvinyl)-alpha-D-glucosamine + NADPH + H(+). The protein operates within cell wall biogenesis; peptidoglycan biosynthesis. Functionally, cell wall formation. The polypeptide is UDP-N-acetylenolpyruvoylglucosamine reductase (Novosphingobium aromaticivorans (strain ATCC 700278 / DSM 12444 / CCUG 56034 / CIP 105152 / NBRC 16084 / F199)).